We begin with the raw amino-acid sequence, 37 residues long: Large ribosomal subunit protein bL36 (37 aa).

Belongs to the bacterial ribosomal protein bL36 family.

This Rippkaea orientalis (strain PCC 8801 / RF-1) (Cyanothece sp. (strain PCC 8801)) protein is Large ribosomal subunit protein bL36.